We begin with the raw amino-acid sequence, 215 residues long: Octanoyltransferase (215 aa).

A BPL/LPL catalytic domain is found at 31–206; the sequence is PDSQDEIWLV…QLVKHLDYAE (176 aa). Substrate is bound by residues 70-77, 137-139, and 150-152; these read RGGQVTYH, SLG, and GLA. Residue Cys168 is the Acyl-thioester intermediate of the active site.

Belongs to the LipB family.

The protein localises to the cytoplasm. It catalyses the reaction octanoyl-[ACP] + L-lysyl-[protein] = N(6)-octanoyl-L-lysyl-[protein] + holo-[ACP] + H(+). It functions in the pathway protein modification; protein lipoylation via endogenous pathway; protein N(6)-(lipoyl)lysine from octanoyl-[acyl-carrier-protein]: step 1/2. In terms of biological role, catalyzes the transfer of endogenously produced octanoic acid from octanoyl-acyl-carrier-protein onto the lipoyl domains of lipoate-dependent enzymes. Lipoyl-ACP can also act as a substrate although octanoyl-ACP is likely to be the physiological substrate. The sequence is that of Octanoyltransferase from Pseudomonas putida (strain W619).